We begin with the raw amino-acid sequence, 116 residues long: Sperm mitochondrial-associated cysteine-rich protein (116 aa).

7 repeat units span residues 6–13 (KHSKCCPA), 14–21 (KGNQCCPP), 30–37 (KGNQCCPP), 38–45 (KQNQCCQP), 46–53 (KGSQCCPP), 54–61 (KHNHCCQP), and 62–68 (KPPCCIQ). The segment at 6-68 (KHSKCCPAKG…CQPKPPCCIQ (63 aa)) is 7 X 7 (OR 8) AA approximate repeats. Residues 80–116 (VSPLNMESEPNSPQTQDKGCQTQQQPHSPQNESRPSK) are disordered. The span at 93 to 104 (QTQDKGCQTQQQ) shows a compositional bias: low complexity. Positions 105–116 (PHSPQNESRPSK) are enriched in polar residues.

As to expression, testis. Is selectively expressed in the spermatids of seminiferous tubules.

Its subcellular location is the cytoplasm. The protein localises to the mitochondrion membrane. Functionally, involved in sperm motility. Its absence is associated with genetic background dependent male infertility. Infertility may be due to reduced sperm motility in the female reproductive tract and inability to penetrate the oocyte zona pellucida. This is Sperm mitochondrial-associated cysteine-rich protein (SMCP) from Homo sapiens (Human).